The primary structure comprises 69 residues: Bowman-Birk type proteinase inhibitor A2 (69 aa).

Intrachain disulfides connect cysteine 12-cysteine 31, cysteine 18-cysteine 29, cysteine 38-cysteine 45, and cysteine 42-cysteine 59.

The protein belongs to the Bowman-Birk serine protease inhibitor family. As to expression, expressed in bulb (at protein level).

Its function is as follows. Serine protease inhibitor. The chain is Bowman-Birk type proteinase inhibitor A2 from Hyacinthus orientalis (Common hyacinth).